The primary structure comprises 156 residues: Ribosomal RNA large subunit methyltransferase H (156 aa).

S-adenosyl-L-methionine-binding positions include Leu-73, Gly-104, and 123-128 (LSALTL).

Belongs to the RNA methyltransferase RlmH family. In terms of assembly, homodimer.

It is found in the cytoplasm. The enzyme catalyses pseudouridine(1915) in 23S rRNA + S-adenosyl-L-methionine = N(3)-methylpseudouridine(1915) in 23S rRNA + S-adenosyl-L-homocysteine + H(+). Its function is as follows. Specifically methylates the pseudouridine at position 1915 (m3Psi1915) in 23S rRNA. This chain is Ribosomal RNA large subunit methyltransferase H, found in Shewanella sp. (strain MR-7).